We begin with the raw amino-acid sequence, 147 residues long: Protein phosphatase 1 regulatory subunit 14B (147 aa).

Residues 1–55 (MADSGTAGGAALAAPAPGPGSGGPGPRVYFQSPPGAAGEGPGGADDEGPVRRQGK) are disordered. Residue A2 is modified to N-acetylalanine. The residue at position 21 (S21) is a Phosphoserine. Y29 is subject to Phosphotyrosine. S32 bears the Phosphoserine mark. T57 bears the Phosphothreonine mark. Residues 61-103 (DRKELRKRLNLEEWILEQLTRLYDCQEEEIPELEIDVDELLDM) are a coiled coil.

It belongs to the PP1 inhibitor family. Post-translationally, phosphorylated primarily on Thr-57 by PKC (in vitro). An unknown Ser is also phosphorylated by PKC (in vitro). As to expression, ubiquitous. Expressed at low levels.

Its subcellular location is the cytoplasm. Its function is as follows. Inhibitor of PPP1CA. Has over 50-fold higher inhibitory activity when phosphorylated. The sequence is that of Protein phosphatase 1 regulatory subunit 14B (PPP1R14B) from Homo sapiens (Human).